A 494-amino-acid polypeptide reads, in one-letter code: Ankyrin repeat domain-containing protein 33B (494 aa).

The segment at 1-80 is disordered; it reads MVLLAGTGPE…SAESVPEGVP (80 aa). Positions 30 to 42 are enriched in acidic residues; it reads VEEDPADYEEFED. 5 ANK repeats span residues 84-113, 120-150, 154-183, 189-218, and 223-255; these read PETATLLRAACANNVGLLRTLVRRGVSVEE, NGRTGLIVACYHGFVDTVVALAECPHVDVNW, EGNTALITAAQAGHAIITNYLLNYFPGLDL, FGFTALMKAAMQGRTDCIRALMLAGADVHA, and RGMSPQEWATYTGRVDAVRLMQRLLERPCPEQF. The interval 349-494 is disordered; sequence RAARGPQAQE…RRTAPWKKRT (146 aa). The segment covering 371–382 has biased composition (basic and acidic residues); it reads TGQEDADSREGS. At Ser405 the chain carries Phosphoserine. Composition is skewed to basic and acidic residues over residues 440–451 and 459–487; these read RPARKGSTKDSG and RYKEAKEEKRKAEEAEKKRQAEAQKERRT. Positions 459–488 form a coiled coil; it reads RYKEAKEEKRKAEEAEKKRQAEAQKERRTA.

The polypeptide is Ankyrin repeat domain-containing protein 33B (ANKRD33B) (Homo sapiens (Human)).